We begin with the raw amino-acid sequence, 148 residues long: UPF0260 protein Maqu_1608 (148 aa).

This sequence belongs to the UPF0260 family.

The sequence is that of UPF0260 protein Maqu_1608 from Marinobacter nauticus (strain ATCC 700491 / DSM 11845 / VT8) (Marinobacter aquaeolei).